A 268-amino-acid polypeptide reads, in one-letter code: Lectin ESA-2 (268 aa).

Repeat copies occupy residues 1 to 67, 68 to 135, 136 to 202, and 203 to 268. A 4 X approximate tandem repeats region spans residues 1 to 268; that stretch reads GRYTVQNQWG…PIGFKGVATS (268 aa).

Monomer.

In terms of biological role, lectin specific for high mannose N-glycans, recognizes the branched moiety of these glycans. Does not recognize other types of N-glycans or monosaccharides. Agglutinates trypsin-treated sheep and rabbit erythrocytes and untreated sheep erythrocytes. Has mitogenic activity on mouse lymphocytes. Does not require metal ions for activity. In Eucheuma serra (Marine red alga), this protein is Lectin ESA-2.